Consider the following 1170-residue polypeptide: Cellulose synthase-like protein D2 (1170 aa).

Disordered stretches follow at residues 1–48, 54–73, and 269–295; these read MASS…RRTH, SYSRDDLDSELGNSGDMSPE, and NEVDNGGGGGGGGGLGGGDGQPAEFTS. Residues 10–24 are compositionally biased toward low complexity; it reads RHSNSSRLSRMSYSG. The segment covering 273–288 has biased composition (gly residues); it reads NGGGGGGGGGLGGGDG. 2 helical membrane passes run 311–331 and 341–361; these read VLSPYRLLILIRMAVLGLFLA and AMWLWGMSVVCELWFGLSWLL. Asp441 is a catalytic residue. Positions 527 to 551 form a coiled coil; sequence HAREEIKAMKRQREAALDDVVEAVK. Asp873 is an active-site residue. Helical transmembrane passes span 955–975, 981–1001, 1027–1047, 1070–1090, 1104–1124, and 1134–1154; these read IFLIVYCFLPALSLFSGQFIV, TFLTYLLVITLTMCMLAVLEI, LAAVLQGLLKVIAGIEISFTL, SLMIPPIVIMMVNLIAIAVGF, LLGGVFFSFWVLAHLYPFAKG, and TIVFVWSGLLAITISLLWVAI.

It belongs to the glycosyltransferase 2 family. Plant cellulose synthase-like D subfamily.

It is found in the golgi apparatus membrane. Thought to be a Golgi-localized beta-glycan synthase that polymerize the backbones of noncellulosic polysaccharides (hemicelluloses) of plant cell wall. This Oryza sativa subsp. japonica (Rice) protein is Cellulose synthase-like protein D2 (CSLD2).